Consider the following 131-residue polypeptide: Aspartate 1-decarboxylase (131 aa).

Ser25 acts as the Schiff-base intermediate with substrate; via pyruvic acid in catalysis. The residue at position 25 (Ser25) is a Pyruvic acid (Ser). Thr57 contacts substrate. The Proton donor role is filled by Tyr58. 73 to 75 (GSA) lines the substrate pocket.

Belongs to the PanD family. In terms of assembly, heterooctamer of four alpha and four beta subunits. The cofactor is pyruvate. Post-translationally, is synthesized initially as an inactive proenzyme, which is activated by self-cleavage at a specific serine bond to produce a beta-subunit with a hydroxyl group at its C-terminus and an alpha-subunit with a pyruvoyl group at its N-terminus.

It is found in the cytoplasm. It carries out the reaction L-aspartate + H(+) = beta-alanine + CO2. Its pathway is cofactor biosynthesis; (R)-pantothenate biosynthesis; beta-alanine from L-aspartate: step 1/1. In terms of biological role, catalyzes the pyruvoyl-dependent decarboxylation of aspartate to produce beta-alanine. The polypeptide is Aspartate 1-decarboxylase (Leptothrix cholodnii (strain ATCC 51168 / LMG 8142 / SP-6) (Leptothrix discophora (strain SP-6))).